Here is a 449-residue protein sequence, read N- to C-terminus: Tol-Pal system protein TolB (449 aa).

Residues 1 to 36 (MDCPNMPLHINRRQMLLSAATAAGALALGPARDAFG) form the signal peptide.

It belongs to the TolB family. The Tol-Pal system is composed of five core proteins: the inner membrane proteins TolA, TolQ and TolR, the periplasmic protein TolB and the outer membrane protein Pal. They form a network linking the inner and outer membranes and the peptidoglycan layer.

It is found in the periplasm. Its function is as follows. Part of the Tol-Pal system, which plays a role in outer membrane invagination during cell division and is important for maintaining outer membrane integrity. This Rhodopseudomonas palustris (strain HaA2) protein is Tol-Pal system protein TolB.